Reading from the N-terminus, the 655-residue chain is Probable replication restart protein PriA (655 aa).

8 residues coordinate Zn(2+): C368, C371, C377, C380, C396, C399, C408, and C411.

The protein belongs to the helicase family. PriA subfamily. As to quaternary structure, component of the replication restart primosome. Zn(2+) serves as cofactor.

In terms of biological role, initiates the restart of stalled replication forks, which reloads the replicative helicase on sites other than the origin of replication. Recognizes and binds to abandoned replication forks and remodels them to uncover a helicase loading site. Promotes assembly of the primosome at these replication forks. The polypeptide is Probable replication restart protein PriA (Mycobacterium bovis (strain ATCC BAA-935 / AF2122/97)).